The sequence spans 133 residues: Large ribosomal subunit protein eL32z (133 aa).

It belongs to the eukaryotic ribosomal protein eL32 family.

This is Large ribosomal subunit protein eL32z (RPL32A) from Arabidopsis thaliana (Mouse-ear cress).